The sequence spans 234 residues: Peptidyl-prolyl cis-trans isomerase FKBP17-3, chloroplastic (234 aa).

Residues methionine 1–serine 28 constitute a chloroplast transit peptide. Residues glycine 130–tyrosine 228 enclose the PPIase FKBP-type domain.

Belongs to the FKBP-type PPIase family.

The protein resides in the plastid. It localises to the chloroplast thylakoid lumen. The enzyme catalyses [protein]-peptidylproline (omega=180) = [protein]-peptidylproline (omega=0). Functionally, PPIases accelerate the folding of proteins. It catalyzes the cis-trans isomerization of proline imidic peptide bonds in oligopeptides. The protein is Peptidyl-prolyl cis-trans isomerase FKBP17-3, chloroplastic (FKBP17-3) of Arabidopsis thaliana (Mouse-ear cress).